The following is a 1573-amino-acid chain: Soluble scavenger receptor cysteine-rich domain-containing protein SSC5D (1573 aa).

Positions 1-16 are cleaved as a signal peptide; it reads MRVLACLLAALVGIQA. The SRCR 1 domain occupies 20 to 120; the sequence is LRLADGPHGC…HEEDAGVVCA (101 aa). Intrachain disulfides connect cysteine 45/cysteine 109, cysteine 58/cysteine 119, and cysteine 89/cysteine 99. Residues 153–192 are disordered; the sequence is EPLVTHAPRPAGNPQNASRKKSPRPKQAKSTRAPLLTTGA. The N-linked (GlcNAc...) asparagine glycan is linked to asparagine 168. A compositionally biased stretch (basic residues) spans 170 to 181; it reads SRKKSPRPKQAK. 2 consecutive SRCR domains span residues 198–298 and 304–404; these read LRLV…LVCT and LRLA…AVCD. Intrachain disulfides connect cysteine 223–cysteine 287, cysteine 236–cysteine 297, cysteine 267–cysteine 277, cysteine 329–cysteine 393, cysteine 342–cysteine 403, and cysteine 373–cysteine 383. 2 N-linked (GlcNAc...) asparagine glycosylation sites follow: asparagine 376 and asparagine 420. Positions 412–465 are disordered; sequence PPTAPTDSNNSTPREAASRPPSTMTSQAPGTAGVSPPPASPTVLWEPGPEAGSP. Residues 431-440 show a composition bias toward polar residues; the sequence is PPSTMTSQAP. The 102-residue stretch at 467–568 folds into the SRCR 4 domain; it reads LRLVAGPSKC…HNEDVGVTCT (102 aa). 3 disulfide bridges follow: cysteine 492/cysteine 557, cysteine 505/cysteine 567, and cysteine 537/cysteine 547. The interval 614–769 is disordered; the sequence is EKTTTKAPGK…SVSTTGESGL (156 aa). A compositionally biased stretch (basic residues) spans 626–637; it reads KSTKKWVTKNAK. Over residues 654 to 671 the composition is skewed to polar residues; sequence AQSPPDLTSQTTAALTTE. Residues 672–685 are compositionally biased toward basic and acidic residues; it reads ASRRPTSEFTRRPT. 2 stretches are compositionally biased toward polar residues: residues 687–702 and 711–735; these read EAPQ…TLTP and KTMA…SIPQ. The 101-residue stretch at 772–872 folds into the SRCR 5 domain; the sequence is VRLADGPNRC…HEEDVGLTCT (101 aa). 3 disulfide bridges follow: cysteine 797–cysteine 861, cysteine 810–cysteine 871, and cysteine 841–cysteine 851. Disordered regions lie at residues 895 to 1475 and 1554 to 1573; these read KGTT…PCVA and MPAP…RGDV. Basic and acidic residues predominate over residues 924–934; it reads RLPDTGSKDGY. Composition is skewed to pro residues over residues 1004–1020 and 1083–1093; these read PPTP…PPGP and TPEPSPTPLPT. A compositionally biased stretch (polar residues) spans 1101 to 1140; sequence DPSTPSEVTSLSPTSEQVPESDTTPDLDTTPYSSTVSEYS. A compositionally biased stretch (pro residues) spans 1144–1160; the sequence is DPSPSPHPTTTPDPTMA. Low complexity-rich tracts occupy residues 1161–1175 and 1185–1277; these read PDPI…TPHF and PHPT…MPHP. Over residues 1278-1328 the composition is skewed to pro residues; it reads TTTPHPTTTPHPTTTPHPTTTPHPTMTPDPTTTPYPTTTPDPTTTPHPTTP. 2 stretches are compositionally biased toward polar residues: residues 1335-1354 and 1364-1380; these read VITT…SPTL and PQLT…TSQI. Over residues 1381–1401 the composition is skewed to low complexity; that stretch reads PTLEPSPALESSPSRSSTATS. Over residues 1464 to 1475 the composition is skewed to pro residues; the sequence is GQSPGPHGPCVA.

As to quaternary structure, interacts with LGALS1 and laminin. As to expression, highly expressed in monocytes/macrophages and T-lymphocytes. Highly expressed in placenta and spleen, and also detected at lower levels in colon, and more weakly in lung, heart and kidney.

It localises to the secreted. The protein resides in the cytoplasm. Binds to extracellular matrix proteins. Binds to pathogen-associated molecular patterns (PAMPs) present on the cell walls of Gram-positive and Gram-negative bacteria and fungi, behaving as a pattern recognition receptor (PRR). Induces bacterial and fungal aggregation and subsequent inhibition of PAMP-induced cytokine release. Does not possess intrinsic bactericidal activity. May play a role in the innate defense and homeostasis of certain epithelial surfaces. The sequence is that of Soluble scavenger receptor cysteine-rich domain-containing protein SSC5D (SSC5D) from Homo sapiens (Human).